The primary structure comprises 192 residues: Erythropoietin (192 aa).

The N-terminal stretch at 1–26 (MGVPERPTLLLLLSLLLIPLGLPVLC) is a signal peptide. Cysteines 33 and 187 form a disulfide. N50, N64, and N109 each carry an N-linked (GlcNAc...) asparagine glycan.

The protein belongs to the EPO/TPO family. In terms of tissue distribution, produced by kidney or liver of adult mammals and by liver of fetal or neonatal mammals.

It localises to the secreted. Hormone involved in the regulation of erythrocyte proliferation and differentiation and the maintenance of a physiological level of circulating erythrocyte mass. Binds to EPOR leading to EPOR dimerization and JAK2 activation thereby activating specific downstream effectors, including STAT1 and STAT3. In Rattus norvegicus (Rat), this protein is Erythropoietin (Epo).